A 396-amino-acid polypeptide reads, in one-letter code: Acetate kinase (396 aa).

Residue Asn-7 participates in Mg(2+) binding. Lys-14 contributes to the ATP binding site. Arg-89 provides a ligand contact to substrate. Asp-146 acts as the Proton donor/acceptor in catalysis. Residues 206–210 (HLGNG), 280–282 (DLR), and 328–332 (GIGEN) each bind ATP. A Mg(2+)-binding site is contributed by Glu-382.

The protein belongs to the acetokinase family. As to quaternary structure, homodimer. Mg(2+) is required as a cofactor. It depends on Mn(2+) as a cofactor.

The protein resides in the cytoplasm. It catalyses the reaction acetate + ATP = acetyl phosphate + ADP. It participates in metabolic intermediate biosynthesis; acetyl-CoA biosynthesis; acetyl-CoA from acetate: step 1/2. Its function is as follows. Catalyzes the formation of acetyl phosphate from acetate and ATP. Can also catalyze the reverse reaction. The chain is Acetate kinase from Maridesulfovibrio salexigens (strain ATCC 14822 / DSM 2638 / NCIMB 8403 / VKM B-1763) (Desulfovibrio salexigens).